A 63-amino-acid chain; its full sequence is Venom peptide 2b (63 aa).

An N-terminal signal peptide occupies residues 1 to 22; sequence MRGTSFILFAVVVILGFLHGNA. 5 AXPX repeats span residues 22–25, 26–29, 32–35, 38–41, and 44–47; these read AEPL, ANPE, and ANPD. The propeptide occupies 23–48; the sequence is EPLANPEPSANPDPLANPDPLANPEA. Residue L62 is modified to Leucine amide.

Belongs to the MCD family. Mastoparan subfamily. In terms of tissue distribution, expressed by the venom gland.

It localises to the secreted. Its subcellular location is the target cell membrane. Antimicrobial peptide with strong and moderate activity against the fungi B.cinerea (MIC=5 uM) and C.albicans (MIC=100 uM), the Gram-negative bacterium E.coli (MIC=200 uM) and the Gram-positive bacterium S.aureus (MIC=25 uM). Shows cytolytic activity against insect cell lines. Has potent hemolytic activity against human erythrocytes (EC(50)=64 uM). In vivo, peptide injection in the vicinity of the head and thorax of lepidopteran larvae induces feeding disorder followed by death due to starvation. In Eumenes pomiformis (Potter wasp), this protein is Venom peptide 2b.